Consider the following 602-residue polypeptide: Leucine-rich repeat-containing protein 40 (602 aa).

Ser71 carries the post-translational modification Phosphoserine. 20 LRR repeats span residues 83–104, 106–127, 129–150, 152–173, 175–196, 198–219, 221–242, 244–265, 266–286, 290–311, 313–335, 336–356, 400–421, 426–447, 450–472, 473–494, 496–517, 519–540, 543–564, and 566–586; these read DLTKLIISNNKLQSLTDDLRLL, ALTVLDIHDNQLTSLPSAIREL, NLQKLNVSHNKLKILPEEITNL, NLKCLYLQHNELTCISEGFEQL, NLEDLDLSNNHLTTVPASFSSL, SLVRLNLSSNELKSLPAEINRM, RLKHLDCNSNLLETIPPELAGM, SLELLYLRRNKLRFLPEFPSCS, LLKELHVGENQIEMLEAEHLK, SILVLDLRDNKLKSVPDEIILL, SLERLDLSNNDISSLPYSLGNLH, LKFLALEGNPLRTIRREIISK, TLKILDYSDKQATLIPDEVFDA, IVTSINFSKNQLCEIPKRMVEL, MVSDVDLSFNKLSFISLELCVLQ, KLTFLDLRNNFLNSLPEEMESL, RLQTINLSFNRFKMLPEVLYRI, TLETILISNNQVGSVDPQKMKM, NLTTLDLQNNDLLQIPPELGNC, and NLRTLLLDGNPFRVPRAAILM.

This chain is Leucine-rich repeat-containing protein 40 (LRRC40), found in Homo sapiens (Human).